The chain runs to 493 residues: Ribose import ATP-binding protein RbsA (493 aa).

ABC transporter domains follow at residues 3–239 (IKMK…VGRE) and 252–493 (GRVV…TGGR). Residue 35 to 42 (GENGAGKS) participates in ATP binding.

This sequence belongs to the ABC transporter superfamily. Ribose importer (TC 3.A.1.2.1) family. In terms of assembly, the complex is composed of an ATP-binding protein (RbsA), two transmembrane proteins (RbsC) and a solute-binding protein (RbsB).

The protein resides in the cell membrane. The catalysed reaction is D-ribose(out) + ATP + H2O = D-ribose(in) + ADP + phosphate + H(+). In terms of biological role, part of the ABC transporter complex RbsABC involved in ribose import. Responsible for energy coupling to the transport system. This Bacillus licheniformis (strain ATCC 14580 / DSM 13 / JCM 2505 / CCUG 7422 / NBRC 12200 / NCIMB 9375 / NCTC 10341 / NRRL NRS-1264 / Gibson 46) protein is Ribose import ATP-binding protein RbsA.